A 250-amino-acid polypeptide reads, in one-letter code: 3-deoxy-manno-octulosonate cytidylyltransferase (250 aa).

The protein belongs to the KdsB family.

It localises to the cytoplasm. The catalysed reaction is 3-deoxy-alpha-D-manno-oct-2-ulosonate + CTP = CMP-3-deoxy-beta-D-manno-octulosonate + diphosphate. The protein operates within nucleotide-sugar biosynthesis; CMP-3-deoxy-D-manno-octulosonate biosynthesis; CMP-3-deoxy-D-manno-octulosonate from 3-deoxy-D-manno-octulosonate and CTP: step 1/1. It participates in bacterial outer membrane biogenesis; lipopolysaccharide biosynthesis. Its function is as follows. Activates KDO (a required 8-carbon sugar) for incorporation into bacterial lipopolysaccharide in Gram-negative bacteria. The sequence is that of 3-deoxy-manno-octulosonate cytidylyltransferase from Herminiimonas arsenicoxydans.